The sequence spans 201 residues: Probable molybdenum cofactor guanylyltransferase (201 aa).

Residues 6-8, lysine 18, aspartate 67, and aspartate 92 contribute to the GTP site; that span reads LAG. Aspartate 92 is a binding site for Mg(2+).

The protein belongs to the MobA family. It depends on Mg(2+) as a cofactor.

It localises to the cytoplasm. The enzyme catalyses Mo-molybdopterin + GTP + H(+) = Mo-molybdopterin guanine dinucleotide + diphosphate. In terms of biological role, transfers a GMP moiety from GTP to Mo-molybdopterin (Mo-MPT) cofactor (Moco or molybdenum cofactor) to form Mo-molybdopterin guanine dinucleotide (Mo-MGD) cofactor. This chain is Probable molybdenum cofactor guanylyltransferase, found in Thermococcus kodakarensis (strain ATCC BAA-918 / JCM 12380 / KOD1) (Pyrococcus kodakaraensis (strain KOD1)).